A 750-amino-acid polypeptide reads, in one-letter code: Photosystem I P700 chlorophyll a apoprotein A1 (750 aa).

8 consecutive transmembrane segments (helical) span residues 70-93 (VFSAHFGQLSIIFLWLSGMYFHGA), 156-179 (LYCTAIGALVFAALMLFAGWFHYH), 195-219 (LNHHLAGLLGLGSLSWAGHQVHVSL), 291-309 (IAHHHLAIAILFLIAGHMY), 346-369 (WHAQLSLNLAMLGSLTIVVAHHMY), 385-411 (LSLFTHHMWIGGFLIVGAAAHAAIFMV), 433-455 (AIISHLNWVCIFLGFHSFGLYIH), and 531-549 (FLVHHIHAFTIHVTVLILL). Residues Cys573 and Cys582 each coordinate [4Fe-4S] cluster. A run of 2 helical transmembrane segments spans residues 589-610 (HVFLGLFWMYNAISVVIFHFSW) and 664-686 (LSAYGLFFLGAHFVWAFSLMFLF). His675 provides a ligand contact to chlorophyll a'. Residues Met683 and Tyr691 each coordinate chlorophyll a. Trp692 contacts phylloquinone. Residues 724-744 (AVGVTHYLLGGIATTWAFFLA) form a helical membrane-spanning segment.

It belongs to the PsaA/PsaB family. In terms of assembly, the PsaA/B heterodimer binds the P700 chlorophyll special pair and subsequent electron acceptors. PSI consists of a core antenna complex that captures photons, and an electron transfer chain that converts photonic excitation into a charge separation. The eukaryotic PSI reaction center is composed of at least 11 subunits. Requires P700 is a chlorophyll a/chlorophyll a' dimer, A0 is one or more chlorophyll a, A1 is one or both phylloquinones and FX is a shared 4Fe-4S iron-sulfur center. as cofactor.

The protein resides in the plastid. It is found in the chloroplast thylakoid membrane. The catalysed reaction is reduced [plastocyanin] + hnu + oxidized [2Fe-2S]-[ferredoxin] = oxidized [plastocyanin] + reduced [2Fe-2S]-[ferredoxin]. PsaA and PsaB bind P700, the primary electron donor of photosystem I (PSI), as well as the electron acceptors A0, A1 and FX. PSI is a plastocyanin-ferredoxin oxidoreductase, converting photonic excitation into a charge separation, which transfers an electron from the donor P700 chlorophyll pair to the spectroscopically characterized acceptors A0, A1, FX, FA and FB in turn. Oxidized P700 is reduced on the lumenal side of the thylakoid membrane by plastocyanin. This chain is Photosystem I P700 chlorophyll a apoprotein A1, found in Lobularia maritima (Sweet alyssum).